The chain runs to 274 residues: Diaminopimelate epimerase (274 aa).

Residues N11, Q44, and N64 each coordinate substrate. The active-site Proton donor is the C73. Residues 74–75 (GN), N157, N190, and 208–209 (ER) contribute to the substrate site. Catalysis depends on C217, which acts as the Proton acceptor. 218–219 (GS) contacts substrate.

Belongs to the diaminopimelate epimerase family. In terms of assembly, homodimer.

The protein resides in the cytoplasm. The catalysed reaction is (2S,6S)-2,6-diaminopimelate = meso-2,6-diaminopimelate. Its pathway is amino-acid biosynthesis; L-lysine biosynthesis via DAP pathway; DL-2,6-diaminopimelate from LL-2,6-diaminopimelate: step 1/1. Catalyzes the stereoinversion of LL-2,6-diaminopimelate (L,L-DAP) to meso-diaminopimelate (meso-DAP), a precursor of L-lysine and an essential component of the bacterial peptidoglycan. The sequence is that of Diaminopimelate epimerase from Photorhabdus laumondii subsp. laumondii (strain DSM 15139 / CIP 105565 / TT01) (Photorhabdus luminescens subsp. laumondii).